A 79-amino-acid polypeptide reads, in one-letter code: Sec-independent protein translocase protein TatA (79 aa).

The helical transmembrane segment at 1–21 (MHMPSGTQWLIILLIVVLLFG) threads the bilayer.

This sequence belongs to the TatA/E family. In terms of assembly, the Tat system comprises two distinct complexes: a TatABC complex, containing multiple copies of TatA, TatB and TatC subunits, and a separate TatA complex, containing only TatA subunits. Substrates initially bind to the TatABC complex, which probably triggers association of the separate TatA complex to form the active translocon.

The protein localises to the cell inner membrane. Its function is as follows. Part of the twin-arginine translocation (Tat) system that transports large folded proteins containing a characteristic twin-arginine motif in their signal peptide across membranes. TatA could form the protein-conducting channel of the Tat system. The chain is Sec-independent protein translocase protein TatA from Campylobacter lari (strain RM2100 / D67 / ATCC BAA-1060).